An 810-amino-acid chain; its full sequence is Lon protease (810 aa).

The Lon N-terminal domain maps to 16-209; the sequence is YPVPPLRDIV…RVYAFMEGEI (194 aa). An ATP-binding site is contributed by 361 to 368; sequence GPPGVGKT. The 182-residue stretch at 598 to 779 folds into the Lon proteolytic domain; the sequence is EDLVGVTTGL…DDVLKHALVR (182 aa). Catalysis depends on residues Ser-685 and Lys-728.

The protein belongs to the peptidase S16 family. In terms of assembly, homohexamer. Organized in a ring with a central cavity.

Its subcellular location is the cytoplasm. The enzyme catalyses Hydrolysis of proteins in presence of ATP.. Its function is as follows. ATP-dependent serine protease that mediates the selective degradation of mutant and abnormal proteins as well as certain short-lived regulatory proteins. Required for cellular homeostasis and for survival from DNA damage and developmental changes induced by stress. Degrades polypeptides processively to yield small peptide fragments that are 5 to 10 amino acids long. Binds to DNA in a double-stranded, site-specific manner. Involved in iron uptake. The chain is Lon protease from Azospirillum brasilense.